The chain runs to 492 residues: FAD-containing monooxygenase EthA (492 aa).

FAD is bound by residues S15, E36, 44–47 (TWDL), D56, and V104. NADP(+) is bound at residue 54-56 (RSD). NADP(+) contacts are provided by residues 183–189 (SGATAVT) and 207–208 (RS).

It belongs to the FAD-binding monooxygenase family. Requires FAD as cofactor.

The protein localises to the cell membrane. It carries out the reaction ethionamide + NADPH + O2 + H(+) = ethionamide S-oxide + NADP(+) + H2O. Monooxygenase able to convert a wide range of ketones to the corresponding esters or lactones via a Baeyer-Villiger oxidation reaction. Can act on long-chain aliphatic ketones (2-hexanone to 2-dodecanone) and on aromatic ketones (phenylacetone and benzylacetone). Is also able to catalyze enantioselective sulfoxidation of methyl-p-tolylsulfide. In vivo, likely functions as a BVMO, but the exact nature of the physiological substrate(s) remains to be established. Functionally, is responsible for the activation of several thiocarbamide-containing pro-drugs, such as ethionamide (ETH), isoxyl (ISO) and thiacetazone (TAC), into reactive species. This chain is FAD-containing monooxygenase EthA (ethA), found in Mycolicibacterium smegmatis (strain ATCC 700084 / mc(2)155) (Mycobacterium smegmatis).